The primary structure comprises 718 residues: Sodium/myo-inositol cotransporter (718 aa).

Topologically, residues 1 to 9 (MRAVLDTAD) are extracellular. A helical transmembrane segment spans residues 10-29 (IAIVALYFILVMCIGFFAMW). Residues 30–38 (KSNRSTVSG) lie on the Cytoplasmic side of the membrane. The chain crosses the membrane as a helical span at residues 39–57 (YFLAGRSMTWVAIGASLFV). Topologically, residues 58–86 (SNIGSEHFIGLAGSGAASGFAVGAWEFNA) are extracellular. Residues 87–110 (LLLLQLLGWVFIPIYIRSGVYTMP) form a helical membrane-spanning segment. Residues 111–123 (EYLSKRFGGHRIQ) lie on the Cytoplasmic side of the membrane. The helical transmembrane segment at 124–144 (VYFAALSLILYIFTKLSVDLY) threads the bilayer. Over 145–157 (SGALFIQESLGWN) the chain is Extracellular. A helical membrane pass occupies residues 158–183 (LYVSVILLIGMTALLTVTGGLVAVIY). Residues 184 to 186 (TDT) lie on the Cytoplasmic side of the membrane. A helical transmembrane segment spans residues 187–205 (LQALLMIIGALTLMIISIM). Over 206 to 303 (EIGGFEEVKR…HAKGSTLMAG (98 aa)) the chain is Extracellular. A glycan (N-linked (GlcNAc...) asparagine) is linked at asparagine 232. Residues 304–324 (FLKLLPMFIIVVPGMISRILF) form a helical membrane-spanning segment. At 325–353 (TDDIACINPEHCMLVCGSRAGCSNIAYPR) the chain is on the cytoplasmic side. A helical transmembrane segment spans residues 354–376 (LVMKLVPVGLRGLMMAVMIAALM). The Extracellular segment spans residues 377–406 (SDLDSIFNSASTIFTLDVYKLIRKSASSRE). The helical transmembrane segment at 407-430 (LMIVGRIFVAFMVVISIAWVPIIV) threads the bilayer. The Cytoplasmic portion of the chain corresponds to 431–443 (EMQGGQMYLYIQE). Residues 444 to 462 (VADYLTPPVAALFLLAIFW) form a helical membrane-spanning segment. The Extracellular portion of the chain corresponds to 463–510 (KRCNEQGAFYGGMAGFVLGAVRLILAFAYRAPECDQPDNRPGFIKDIH). Residues 511–532 (YMYVATGLFWVTGLITVIVSLL) traverse the membrane as a helical segment. Topologically, residues 533–695 (TPPPTKEQIR…QMLEETRQVK (163 aa)) are cytoplasmic. Phosphoserine occurs at positions 594 and 632. The chain crosses the membrane as a helical span at residues 696-716 (VILNIGLFAVCSLGIFMFVYF). Topologically, residues 717–718 (SL) are extracellular.

The protein belongs to the sodium:solute symporter (SSF) (TC 2.A.21) family. Interacts with KCNQ2 (via the pore module). Interacts with KCNQ1; this interaction is direct. Forms coregulatory complexes with ion channels KCNQ2-KCNQ3 and KCNQ1-KCNE2.

It localises to the apical cell membrane. Its subcellular location is the basolateral cell membrane. It carries out the reaction myo-inositol(out) + 2 Na(+)(out) = myo-inositol(in) + 2 Na(+)(in). The enzyme catalyses scyllo-inositol(out) + 2 Na(+)(out) = scyllo-inositol(in) + 2 Na(+)(in). Its function is as follows. Electrogenic Na(+)-coupled sugar symporter that actively transports myo-inositol and its stereoisomer scyllo-inositol across the plasma membrane, with a Na(+) to sugar coupling ratio of 2:1. Maintains myo-inositol concentration gradient that defines cell volume and fluid balance during osmotic stress, in particular in the fetoplacental unit and central nervous system. Forms coregulatory complexes with voltage-gated K(+) ion channels, allosterically altering ion selectivity, voltage dependence and gating kinetics of the channel. In turn, K(+) efflux through the channel forms a local electrical gradient that modulates electrogenic Na(+)-coupled myo-inositol influx through the transporter. Associates with KCNQ1-KCNE2 channel in the apical membrane of choroid plexus epithelium and regulates the myo-inositol gradient between blood and cerebrospinal fluid with an impact on neuron excitability. Associates with KCNQ2-KCNQ3 channel altering ion selectivity, increasing Na(+) and Cs(+) permeation relative to K(+) permeation. Provides myo-inositol precursor for biosynthesis of phosphoinositides such as PI(4,5)P2, thus indirectly affecting the activity of phosphoinositide-dependent ion channels and Ca(2+) signaling upon osmotic stress. This is Sodium/myo-inositol cotransporter from Homo sapiens (Human).